The following is a 122-amino-acid chain: Protein 7a (122 aa).

Residues 1 to 15 (MKIILFLTLIALATC) form the signal peptide. The X4e domain maps to 16–81 (ELYHYQECVR…RHTYQLRARS (66 aa)). Topologically, residues 16-96 (ELYHYQECVR…FIRQEEVYQE (81 aa)) are virion surface. Disulfide bonds link cysteine 23/cysteine 58 and cysteine 35/cysteine 67. Residues 97-117 (LYSPLFLIVAALVFIILCFTI) form a helical membrane-spanning segment. The Intravirion portion of the chain corresponds to 118 to 122 (KRKTE). The Di-lysine motif motif lies at 118-122 (KRKTE).

Interacts with the spike glycoprotein, M protein, E protein and the accessory protein 3.

It is found in the virion. The protein resides in the host endoplasmic reticulum membrane. It localises to the host endoplasmic reticulum-Golgi intermediate compartment membrane. Its subcellular location is the host Golgi apparatus membrane. Non-structural protein which is dispensable for virus replication in cell culture. In Bat coronavirus HKU3 (BtCoV), this protein is Protein 7a.